The chain runs to 76 residues: Tautomerase PptA (76 aa).

Pro2 serves as the catalytic Proton acceptor; via imino nitrogen.

This sequence belongs to the 4-oxalocrotonate tautomerase family. PptA subfamily. In terms of assembly, homodimer.

It is found in the cytoplasm. This chain is Tautomerase PptA, found in Cronobacter sakazakii (strain ATCC BAA-894) (Enterobacter sakazakii).